We begin with the raw amino-acid sequence, 166 residues long: MKVLFLTANEFEDVELIYPYHRLKEEGHEVYIASFERGTITGKHGYSVKVDLTFDKVNPEEFDALVLPGGRAPERVRLNEKAVSIARKMFSEGKPVASICHGPQILISAGVLRGRKGTSYPGIKDDMINAGVEWVDAEVVVDGNWVSSRVPADLYAWMREFVKLLK.

Residues Met1 to Lys166 enclose the PfpI endopeptidase domain. Catalysis depends on Cys100, which acts as the Nucleophile. His101 is an active-site residue.

The protein belongs to the peptidase C56 family. As to quaternary structure, homohexamer formed by a dimer of trimers that assemble into a hollow ring structure.

The protein localises to the cytoplasm. The enzyme catalyses N(omega)-(1-hydroxy-2-oxopropyl)-L-arginyl-[protein] + H2O = lactate + L-arginyl-[protein] + H(+). It carries out the reaction N(6)-(1-hydroxy-2-oxopropyl)-L-lysyl-[protein] + H2O = lactate + L-lysyl-[protein] + H(+). It catalyses the reaction S-(1-hydroxy-2-oxopropyl)-L-cysteinyl-[protein] + H2O = lactate + L-cysteinyl-[protein] + H(+). The catalysed reaction is N(omega)-(1-hydroxy-2-oxoethyl)-L-arginyl-[protein] + H2O = L-arginyl-[protein] + glycolate + H(+). The enzyme catalyses N(6)-(1-hydroxy-2-oxoethyl)-L-lysyl-[protein] + H2O = glycolate + L-lysyl-[protein] + H(+). It carries out the reaction S-(1-hydroxy-2-oxoethyl)-L-cysteinyl-[protein] + H2O = glycolate + L-cysteinyl-[protein] + H(+). Its function is as follows. Deglycase that catalyzes the deglycation of the Maillard adducts formed between amino groups of proteins and reactive carbonyl groups of glyoxals. Thus, functions as a protein deglycase that repairs methylglyoxal- and glyoxal-glycated proteins, and releases repaired proteins and lactate or glycolate, respectively. Deglycates cysteine, arginine and lysine residues in proteins, and thus reactivates these proteins by reversing glycation by glyoxals. Acts on early glycation intermediates (hemithioacetals and aminocarbinols), preventing the formation of advanced glycation endproducts (AGE) that cause irreversible damage. Also displays proteolytic activity. This Pyrococcus horikoshii (strain ATCC 700860 / DSM 12428 / JCM 9974 / NBRC 100139 / OT-3) protein is Deglycase PH1704.